A 197-amino-acid chain; its full sequence is dITP/XTP pyrophosphatase (197 aa).

8–13 (TGNPGK) serves as a coordination point for substrate. Residues Glu-40 and Asp-69 each contribute to the Mg(2+) site. Asp-69 serves as the catalytic Proton acceptor. Substrate contacts are provided by residues Ser-70, 154–157 (FGYD), Lys-177, and 182–183 (HR).

Belongs to the HAM1 NTPase family. As to quaternary structure, homodimer. The cofactor is Mg(2+).

The enzyme catalyses XTP + H2O = XMP + diphosphate + H(+). It catalyses the reaction dITP + H2O = dIMP + diphosphate + H(+). It carries out the reaction ITP + H2O = IMP + diphosphate + H(+). In terms of biological role, pyrophosphatase that catalyzes the hydrolysis of nucleoside triphosphates to their monophosphate derivatives, with a high preference for the non-canonical purine nucleotides XTP (xanthosine triphosphate), dITP (deoxyinosine triphosphate) and ITP. Seems to function as a house-cleaning enzyme that removes non-canonical purine nucleotides from the nucleotide pool, thus preventing their incorporation into DNA/RNA and avoiding chromosomal lesions. The polypeptide is dITP/XTP pyrophosphatase (Pectobacterium atrosepticum (strain SCRI 1043 / ATCC BAA-672) (Erwinia carotovora subsp. atroseptica)).